The chain runs to 529 residues: Biotin-dependent 3-methylcrotonyl-coenzyme A carboxylase beta1 subunit (529 aa).

The CoA carboxyltransferase N-terminal domain maps to 16–272 (HRRLVAELNN…CEPAQWDVRR (257 aa)). In terms of domain architecture, CoA carboxyltransferase C-terminal spans 275 to 521 (EPKYPQAELY…SLCAHAPLDQ (247 aa)).

This sequence belongs to the AccD/PCCB family. As to quaternary structure, the biotin-dependent acyl-CoA carboxylase complex is composed of AccA1, which contains the biotin carboxylase (BC) and biotin carboxyl carrier protein (BCCP) domains, and AccD1, which contains the carboxyl transferase (CT) domain. The AccA1/AccD1 complex forms a dodecamer.

The enzyme catalyses 3-methylbut-2-enoyl-CoA + N(6)-carboxybiotinyl-L-lysyl-[protein] = 3-methyl-(2E)-glutaconyl-CoA + N(6)-biotinyl-L-lysyl-[protein]. It functions in the pathway amino-acid degradation; L-leucine degradation. Its function is as follows. Component of a biotin-dependent acyl-CoA carboxylase complex. This subunit transfers the CO2 from carboxybiotin to the CoA ester substrate. When associated with the alpha1 subunit AccA1, is involved in branched amino-acid catabolism with methylcrotonyl coenzyme A as the substrate. Shows residual with propionyl-CoA and acetyl-CoA. The protein is Biotin-dependent 3-methylcrotonyl-coenzyme A carboxylase beta1 subunit of Mycobacterium tuberculosis (strain ATCC 25618 / H37Rv).